Reading from the N-terminus, the 554-residue chain is Zinc finger protein syd-9 (554 aa).

3 C2H2-type zinc fingers span residues 20 to 43 (LTCP…QMFH), 65 to 87 (FICE…RSVH), and 93 to 116 (YVCK…LKHH). Disordered regions lie at residues 136-158 (KIVT…TATP), 298-319 (SPDT…PPMA), and 342-383 (ASGQ…CPSP). Residues 142-158 (NGPTTNGSTPTTSTATP) are compositionally biased toward low complexity. Polar residues-rich tracts occupy residues 351-360 (PDSTDTQKGC) and 370-379 (SDPSTSSGDS). The C2H2-type 4 zinc finger occupies 387-410 (LHCKECGTLVRKSSHLPIHMTMSH). The segment at 516 to 554 (RMEMSLSPIKPFQQRFSRERSSSSSVERSPSRERSRSPL) is disordered. Over residues 544-554 (SPSRERSRSPL) the composition is skewed to basic and acidic residues.

Expressed mainly in body wall muscles and ventral cord motoneurons.

It is found in the nucleus. Its subcellular location is the nucleus speckle. Its function is as follows. Plays a role in regulating synaptic function, probably by modulation of endocytosis. May be dispensable in muscle for normal locomotion. May be involved in post-transcriptional mRNA processing, in parallel with unc-75. This chain is Zinc finger protein syd-9, found in Caenorhabditis elegans.